We begin with the raw amino-acid sequence, 95 residues long: Integration host factor subunit beta (95 aa).

A disordered region spans residues 57–76; sequence APRTGRNPKTGDKVDLEGKY. Basic and acidic residues predominate over residues 65 to 76; it reads KTGDKVDLEGKY.

It belongs to the bacterial histone-like protein family. As to quaternary structure, heterodimer of an alpha and a beta chain.

This protein is one of the two subunits of integration host factor, a specific DNA-binding protein that functions in genetic recombination as well as in transcriptional and translational control. This is Integration host factor subunit beta from Enterobacter sp. (strain 638).